We begin with the raw amino-acid sequence, 500 residues long: Na(+)/H(+) antiporter NhaB (500 aa).

The next 12 membrane-spanning stretches (helical) occupy residues 28-50, 68-88, 98-118, 121-141, 145-165, 205-225, 244-264, 311-331, 350-370, 394-414, 449-469, and 477-497; these read FLLLNPLLLWLAGPVTSAWVLVG, GGLLVLEALLLGLATPEALYA, LLLMFMVAGIYFMKDLLLLLF, LLLGVRSKALLSLLFCLLAAL, FLDALTVTAVVISVAVAFFAV, LLMHAAVGTALGGVCTLVGEP, QVAPVSMPVLAAGLLTCVLLE, VLIVGLALHVAEVGLIGLLVI, FQEALPFTALLVVFFAVVAVI, MLFIANGLLSAISDNVFVATI, VATPNGQAAFLFLLTSSIAPL, and MVWMALPYTLVMGGLGWWAVS.

It belongs to the NhaB Na(+)/H(+) (TC 2.A.34) antiporter family.

It localises to the cell inner membrane. The catalysed reaction is 2 Na(+)(in) + 3 H(+)(out) = 2 Na(+)(out) + 3 H(+)(in). Functionally, na(+)/H(+) antiporter that extrudes sodium in exchange for external protons. In Pseudomonas aeruginosa (strain UCBPP-PA14), this protein is Na(+)/H(+) antiporter NhaB.